The chain runs to 342 residues: S-adenosylmethionine:tRNA ribosyltransferase-isomerase (342 aa).

It belongs to the QueA family. Monomer.

It is found in the cytoplasm. The catalysed reaction is 7-aminomethyl-7-carbaguanosine(34) in tRNA + S-adenosyl-L-methionine = epoxyqueuosine(34) in tRNA + adenine + L-methionine + 2 H(+). It participates in tRNA modification; tRNA-queuosine biosynthesis. Its function is as follows. Transfers and isomerizes the ribose moiety from AdoMet to the 7-aminomethyl group of 7-deazaguanine (preQ1-tRNA) to give epoxyqueuosine (oQ-tRNA). The sequence is that of S-adenosylmethionine:tRNA ribosyltransferase-isomerase from Streptococcus mutans serotype c (strain ATCC 700610 / UA159).